The chain runs to 244 residues: MSMLCYTLIIAFLIGTWAAPKSEDNVPLGSPATSDLSDTSCAQTHEGLKTSRNTDQRHPAPKKAEDQELGSVANIIVDPKLFQKRRFQSSRVLFSTQPPPLSRDEQSVEFLDNEDTLNRNIRAKRENHPVHNQGEHSVCDSVSDWVIKTTATDIRGNVVTVMEDINLNNEVYKQYFFETKCRNPSPNPVQSECRGIDSRLWNSYCTTTQTFVRALTMEGNQASWRFIRIDTACVCVIIRKTDNF.

The signal sequence occupies residues 1–18; that stretch reads MSMLCYTLIIAFLIGTWA. A propeptide spanning residues 19 to 125 is cleaved from the precursor; the sequence is APKSEDNVPL…TLNRNIRAKR (107 aa). Residues 47-66 are compositionally biased toward basic and acidic residues; that stretch reads GLKTSRNTDQRHPAPKKAED. A disordered region spans residues 47-67; the sequence is GLKTSRNTDQRHPAPKKAEDQ. 3 disulfides stabilise this stretch: cysteine 139-cysteine 205, cysteine 181-cysteine 233, and cysteine 193-cysteine 235.

The protein belongs to the NGF-beta family. Homodimer; non-covalently linked. As to expression, expressed by the venom gland.

It is found in the secreted. In terms of biological role, nerve growth factor is important for the development and maintenance of the sympathetic and sensory nervous systems. It stimulates division and differentiation of sympathetic and embryonic sensory neurons as well as basal forebrain cholinergic neurons in the brain. Its relevance in the snake venom is not clear. However, it has been shown to inhibit metalloproteinase-dependent proteolysis of platelet glycoprotein Ib alpha, suggesting a metalloproteinase inhibition to prevent metalloprotease autodigestion and/or protection against prey proteases. Binds a lipid between the two protein chains in the homodimer. The lipid-bound form promotes histamine relase from mouse mast cells, contrary to the lipid-free form. This Tropidechis carinatus (Australian rough-scaled snake) protein is Venom nerve growth factor 2.